Consider the following 231-residue polypeptide: MGMAKLTKKQKMFAEKVDSLKSYDALEGFSLVSELATAKFSESIDVAIKLGIDPRKSDQVVRGATVMPNGTGKDVRVAVFTGDANAAAAKEAGAEFVGMDDLAAEVKGGMMDFDVVIASPDAMRVVGMLGQVLGPRGLMPNPKTGTVTPDVVTAIKNAKSGQVRFRADKAGIVHASIGKVDFAPEKLKENLNALIEDLNKAKPAAAKGTYMKKVSISSTMGPGIVLDQSSL.

This sequence belongs to the universal ribosomal protein uL1 family. In terms of assembly, part of the 50S ribosomal subunit.

In terms of biological role, binds directly to 23S rRNA. The L1 stalk is quite mobile in the ribosome, and is involved in E site tRNA release. Protein L1 is also a translational repressor protein, it controls the translation of the L11 operon by binding to its mRNA. The polypeptide is Large ribosomal subunit protein uL1 (Hydrogenovibrio crunogenus (strain DSM 25203 / XCL-2) (Thiomicrospira crunogena)).